The chain runs to 867 residues: DNA mismatch repair protein MutS (867 aa).

609 to 616 (GPNMSGKS) lines the ATP pocket.

This sequence belongs to the DNA mismatch repair MutS family.

Functionally, this protein is involved in the repair of mismatches in DNA. It is possible that it carries out the mismatch recognition step. This protein has a weak ATPase activity. The sequence is that of DNA mismatch repair protein MutS from Latilactobacillus sakei subsp. sakei (strain 23K) (Lactobacillus sakei subsp. sakei).